The sequence spans 678 residues: Protein mono-ADP-ribosyltransferase PARP15 (678 aa).

Over residues 1-19 the composition is skewed to low complexity; that stretch reads MAAPGPLPAAALSPGAPTP. The interval 1-67 is disordered; it reads MAAPGPLPAA…SSRSMSRDNK (67 aa). Basic residues predominate over residues 49–58; the sequence is GARKASRRSS. Macro domains are found at residues 78-267 and 293-464; these read NVVA…TNWS and CFTA…KKRD. Substrate is bound by residues 312-313, 324-325, R331, V335, 409-413, and Q449; these read DI, ST, and GTGNA. A PARP catalytic domain is found at 482-678; it reads LPEHWTDMNH…YPEYLITFTA (197 aa).

The protein belongs to the ARTD/PARP family.

The protein resides in the nucleus. The catalysed reaction is L-aspartyl-[protein] + NAD(+) = 4-O-(ADP-D-ribosyl)-L-aspartyl-[protein] + nicotinamide. It carries out the reaction L-glutamyl-[protein] + NAD(+) = 5-O-(ADP-D-ribosyl)-L-glutamyl-[protein] + nicotinamide. Its function is as follows. Mono-ADP-ribosyltransferase that mediates mono-ADP-ribosylation of target proteins. Acts as a negative regulator of transcription. The protein is Protein mono-ADP-ribosyltransferase PARP15 of Homo sapiens (Human).